The sequence spans 568 residues: Protein AF-9 (568 aa).

Positions 1 to 138 (MASSCAVQVK…EDFRRKLLKA (138 aa)) constitute a YEATS domain. Histone H3K9cr binding stretches follow at residues 78–80 (YAG) and 106–108 (LHL). Positions 138–475 (AGGDPNRSIH…PPPPLLKTNN (338 aa)) are disordered. Low complexity predominate over residues 149–190 (SSSSSSSSSSSSSSSSSSSSSSSSSSSSSSSSSSSSSSSSSS). Residues 202–265 (EHKEKPSKDS…PKPMSKEPKP (64 aa)) show a composition bias toward basic and acidic residues. Ser288 and Ser294 each carry phosphoserine. Positions 295 to 300 (AKKRKK) match the Nuclear localization signal motif. Residues 303-313 (SEALFKSFSSA) are compositionally biased toward low complexity. The span at 322 to 349 (ADKKQIKDKSHVKMGKVKIESETSEKKK) shows a compositional bias: basic and acidic residues. Lys339 is covalently cross-linked (Glycyl lysine isopeptide (Lys-Gly) (interchain with G-Cter in SUMO2)). Over residues 357–368 (DIVDPNDSDVEE) the composition is skewed to acidic residues. Positions 371-395 (SSKSDSEQPSPASSSSSSSSSFTPS) are enriched in low complexity. 2 positions are modified to phosphoserine: Ser412 and Ser419. Positions 414-429 (DNEEESDEVEDNDNDS) are enriched in acidic residues. Low complexity predominate over residues 445–461 (VSLSDGSDSESSSASSP). Position 483 is a phosphoserine (Ser483).

Component of the super elongation complex (SEC), at least composed of EAF1, EAF2, CDK9, MLLT3/AF9, AFF (AFF1 or AFF4), the P-TEFb complex and ELL (ELL, ELL2 or ELL3). Interacts with BCOR. Interacts with CBX8. Interacts with ALKBH4. Enriched in undifferentiated hematopoietic stem cells in fetal liver, cord blood and bone marrow.

It is found in the nucleus. The protein localises to the chromosome. Its activity is regulated as follows. Crotonylated lysine binding is strongly inhibited by the peptide XL-07i, carrying a 2-furancarbonyl side chain and capped with a hydrophobic carboxybenzyl group. XL-07i targets the unique pi-pi-pi stacking interaction at the crotonylation recognition site. Functionally, chromatin reader component of the super elongation complex (SEC), a complex required to increase the catalytic rate of RNA polymerase II transcription by suppressing transient pausing by the polymerase at multiple sites along the DNA. Specifically recognizes and binds acylated histone H3, with a preference for histone H3 that is crotonylated. Crotonylation marks active promoters and enhancers and confers resistance to transcriptional repressors. Recognizes and binds histone H3 crotonylated at 'Lys-9' (H3K9cr), and with slightly lower affinity histone H3 crotonylated at 'Lys-18' (H3K18cr). Also recognizes and binds histone H3 acetylated and butyrylated at 'Lys-9' (H3K9ac and H3K9bu, respectively), but with lower affinity than crotonylated histone H3. In the SEC complex, MLLT3 is required to recruit the complex to crotonylated histones. Recruitment of the SEC complex to crotonylated histones promotes recruitment of DOT1L on active chromatin to deposit histone H3 'Lys-79' methylation (H3K79me). Plays a key role in hematopoietic stem cell (HSC) maintenance by preserving, rather than conferring, HSC stemness. Acts by binding to the transcription start site of active genes in HSCs and sustaining level of H3K79me2, probably by recruiting DOT1L. The sequence is that of Protein AF-9 from Homo sapiens (Human).